Reading from the N-terminus, the 271-residue chain is Ribosomal RNA small subunit methyltransferase A (271 aa).

Positions 11, 13, 38, 58, 86, and 101 each coordinate S-adenosyl-L-methionine.

This sequence belongs to the class I-like SAM-binding methyltransferase superfamily. rRNA adenine N(6)-methyltransferase family. RsmA subfamily.

Its subcellular location is the cytoplasm. It carries out the reaction adenosine(1518)/adenosine(1519) in 16S rRNA + 4 S-adenosyl-L-methionine = N(6)-dimethyladenosine(1518)/N(6)-dimethyladenosine(1519) in 16S rRNA + 4 S-adenosyl-L-homocysteine + 4 H(+). In terms of biological role, specifically dimethylates two adjacent adenosines (A1518 and A1519) in the loop of a conserved hairpin near the 3'-end of 16S rRNA in the 30S particle. May play a critical role in biogenesis of 30S subunits. The chain is Ribosomal RNA small subunit methyltransferase A from Helicobacter pylori (strain J99 / ATCC 700824) (Campylobacter pylori J99).